The sequence spans 109 residues: SRA stem-loop-interacting RNA-binding protein, mitochondrial (109 aa).

Ser15 is modified (phosphoserine). In terms of domain architecture, RRM spans 19-103 (PVAFVRRIPW…RRPKLPQTSD (85 aa)). The residue at position 101 (Thr101) is a Phosphothreonine. The residue at position 102 (Ser102) is a Phosphoserine.

Ubiquitously expressed, with highest level in heart, liver, skeletal muscle and testis.

It is found in the mitochondrion. The protein resides in the nucleus. In terms of biological role, RNA-binding protein that acts as a nuclear receptor corepressor. Probably acts by binding the SRA RNA, and repressing the SRA-mediated nuclear receptor coactivation. Binds the STR7 loop of SRA RNA. Also able to repress glucocorticoid (GR), androgen (AR), thyroid (TR) and VDR-mediated transactivation. The polypeptide is SRA stem-loop-interacting RNA-binding protein, mitochondrial (SLIRP) (Homo sapiens (Human)).